We begin with the raw amino-acid sequence, 1061 residues long: MKRMLINATQQEELRVALVDGQRLYDLDIESPGHEQKKANIYKGKITRIEPSLEAAFVDYGAERHGFLPLKEIAREYFPANYSAHGRPNIKDVLREGQEVIVQIDKEERGNKGAALTTFISLAGSYLVLMPNNPRAGGISRRIEGDDRTELKEALASLELPEGMGLIVRTAGVGKSAEALQWDLSFRLKHWEAIKKAAESRPAPFLIHQESNVIVRAFRDYLRQDIGEILIDNPKVLELARQHIAALGRPDFSSKIKLYTGEIPLFSHYQIESQIESAFQREVRLPSGGSIVIDSTEALTAIDINSARATRGGDIEETAFNTNLEAADEIARQLRLRDLGGLIVIDFIDMTPVRHQRAVENRLREAVRQDRARIQISHISRFGLLEMSRQRLSPSLGESSHHVCPRCSGTGTVRDNESLSLSILRLIEEEALKENTQEVHAIVPVPIASYLLNEKRSAVNAIETRQDGVRCVIVPNDQMETPHYHVLRVRKGEETPTLSYMLPKLHEEAMALPSEEEFAERKRPEQPALATFAMPDVPPAPTPAEPAAPVVAPAPKAAPATPAAPAQPGLLSRFFGALKALFSGGEETKPTEQPAPKAEAKPERQQDRRKPRQNNRRDRNERRDTRSERTEGSDNREENRRNRRQAQQQTAETRESRQQAEVTEKARTADEQQAPRRERSRRRNDDKRQAQQEAKALNVEEQSVQETEQEERVRPVQPRRKQRQLNQKVRYEQSVAEEAVVAPVVEETVAAEPIVQEAPAPRTELVKVPLPVVAQTAPEQQEENNADNRDNGGMPRRSRRSPRHLRVSGQRRRRYRDERYPTQSPMPLTVACASPELASGKVWIRYPIVRPQDVQVEEQREQEEVHVQPMVTEVPVAAAIEPVVSAPVVEEVAGVVEAPVQVAEPQPEVVETTHPEVIAAAVTEQPQVITESDVAVAQEVAEQAEPVVEPQEETADIEEVVETAEVVVAEPEVVAQPAAPVVAEVAAEVETVAAVEPEVTVEHNHATAPMTRAPAPEYVPEAPRHSDWQRPTFAFEGKGAAGGHTATHHASAAPARPQPVE.

In terms of domain architecture, S1 motif spans Ala39–Phe119. The interval Phe57–Lys112 is interaction with RNA. Residues Arg169–Thr170 are interaction with RNA 5'-terminal monophosphate. Positions 303 and 346 each coordinate Mg(2+). Residues Cys404 and Cys407 each coordinate Zn(2+). Residues Cys404–Cys407 form a required for zinc-mediated homotetramerization and catalytic activity region. 3 disordered regions span residues Phe532–Pro565, Glu586–Tyr731, and Glu752–Thr822. Positions Asp536–Pro546 are enriched in pro residues. Positions Ala547 to Pro565 are enriched in low complexity. Basic and acidic residues-rich tracts occupy residues Ala598–Arg608, Asn615–Arg640, and Glu652–Ala690. Basic residues predominate over residues Arg796 to Arg814. Residues Ala833–Arg850 are interaction with enolase. The interval Glu1021–Glu1061 is interaction with PNPase. The disordered stretch occupies residues Pro1031–Glu1061. Over residues Gly1043–Ala1055 the composition is skewed to low complexity.

The protein belongs to the RNase E/G family. RNase E subfamily. In terms of assembly, component of the RNA degradosome, which is a multiprotein complex involved in RNA processing and mRNA degradation. Within the RNA degradosome, RNase E assembles into a homotetramer formed by a dimer of dimers. Tetramerization is essential for catalytic activity, but not for RNA-binding. Interacts with RhlB, PNPase (pnp) and enolase (eno). Interacts with DeaD at reduced temperature. Requires Zn(2+) as cofactor. Mg(2+) serves as cofactor.

It localises to the cytoplasm. Its subcellular location is the cell inner membrane. It carries out the reaction Endonucleolytic cleavage of single-stranded RNA in A- and U-rich regions.. With respect to regulation, the presence of a 5'-monophosphate on substrate RNA accelerates its cleavage by catalytically activating the enzyme. Binding to the membrane stabilizes protein structure and increases affinity for the substrate. In terms of biological role, endoribonuclease that plays a central role in RNA processing and decay. Required for the maturation of 5S and 16S rRNAs and the majority of tRNAs. Also involved in the degradation of most mRNAs. Can also process other RNA species, such as RNAI, a molecule that controls the replication of ColE1 plasmid, and the cell division inhibitor DicF-RNA. It initiates the decay of RNAs by cutting them internally near their 5'-end. It is able to remove poly(A) tails by an endonucleolytic process. Required to initiate rRNA degradation during both starvation and quality control; acts after RNase PH (rph) exonucleolytically digests the 3'-end of the 16S rRNA. Degradation of 16S rRNA leads to 23S rRNA degradation. Processes the 3 tRNA(Pro) precursors immediately after the 3'-CCA to generate the mature ends. Prefers 5'-monophosphorylated substrates over 5'-triphosphorylated substrates. 5'-monophosphate-assisted cleavage requires at least 2 and preferably 3 or more unpaired 5'-terminal nucleotides. The optimal spacing between the 5' end and the scissile phosphate appears to be 8 nucleotides. Any sequence of unpaired nucleotides at the 5'-end is tolerated. The polypeptide is Ribonuclease E (Escherichia coli (strain K12)).